The chain runs to 306 residues: Ribonuclease BN (306 aa).

Zn(2+) contacts are provided by His-64, His-66, Asp-68, His-69, His-141, Asp-212, and His-270. Asp-68 functions as the Proton acceptor in the catalytic mechanism.

Belongs to the RNase Z family. RNase BN subfamily. As to quaternary structure, homodimer. Zn(2+) is required as a cofactor.

Zinc phosphodiesterase, which has both exoribonuclease and endoribonuclease activities. The sequence is that of Ribonuclease BN from Klebsiella pneumoniae (strain 342).